Consider the following 486-residue polypeptide: MATFKDACYHYKRINKLNNNSLKLGVNDTWRPSPPTKYKGWCLDCCQHTDLTYCSGCTMYHVCQWCSQYGRCFLDNEPHLLRMRTFKNEVTKDDLKNLIDMYETLFPMNHKIVCRFINTARQHKCRNECMTQWYNHLLMPITLQSLSIELDGDVYYVFGYYDNMNNINQTPFSFINLVDIYDKLLLDDVNFTRMSFLPASLQQEYALRYFSKSRFINEQRKCVNDSHFSINVLENLHNPSFKIQITRNCSELSFDWNEACKLVKNVSAYFDMLKTSHIEFYSVSTRCRIFTQCKLKMASKLIKPNYITSNHKTLATEVHNCKWCSVNNSYTVWNDFRIKKIYDNIFNFLRALVKSNVNIGHCSSQEKIYEYVKDVLNVCDDERWKTSIMEIFNCLEPVELDDVKYVLFNHEINWDVINVLVHSIGKVPQILTLENVITIMQSIIYEWFDIRYMRNTPMVTFTIDKLRRLYTGLKTVEYDSGISDIE.

Positions 1–81 (MATFKDACYH…CFLDNEPHLL (81 aa)) are RNA-binding. Positions 42 to 79 (CLDCCQHTDLTYCSGCTMYHVCQWCSQYGRCFLDNEPH) are zinc-binding domain. The interval 82-176 (RMRTFKNEVT…INQTPFSFIN (95 aa)) is important for cytoskeleton localization. The segment at 317–486 (EVHNCKWCSV…EYDSGISDIE (170 aa)) is interaction with host IRF3. The IKBKB-like degron (ILD) motif motif lies at 479–483 (DSGIS). The pLxIS motif motif lies at 480–483 (SGIS).

The protein belongs to the rotavirus NSP1 family. Interacts (via C-terminus) with host IRF3; this interaction leads to IRF3 degradation. Interacts with host IRF7; this interaction leads to IRF7 degradation. Interacts with host CUL1 and CUL3. Interacts with host BTRC. The C-terminal region is phosphorylated by host CKII/CSNK2A1. Phosphorylation of the DSGXS motif is essential for host NF-kappa-B inhibition.

It localises to the host cytoplasm. It is found in the host cytoskeleton. Functionally, plays a role in the inhibition of host innate immunity by inducing the degradation of key host factors required to activate interferon production such as IRF3, IRF5 or IRF7. Associates with components of cullin RING ligases (CRLs) including CUL1 or CUL3, which are essential multisubunit ubiquitination complexes, to modulate their activities. Recognizes the host NF-kappa-B regulator BTRC through the presence of a DSGXS motif in the C-terminal substrate recognition domain. This Rotavirus A (strain RVA/Human/Japan/K8/1977/G1P3A[9]) (RV-A) protein is Non-structural protein 1.